The following is a 320-amino-acid chain: MRILRIYLDGAYDTGKSTTARVMALGGALYVPEPMAYWRTLFDTDTVAGIYDAQTRKQNGSLSEEDAALVTAHDQAAFATPYLLLHTRLVPLFGPAVEGPPEMTVVFDRHPVAATVCFPLARFIVGDISAAAFVGLAATLPGEPPGGNLVVASLDPDEHLRRLRARARAGEHVDARLLTALRNVYAMLVNTSRYLSSGRRWRDDWGRAPRFDQTTRDCLALNELCRPRDDPELQDTLFGAYKAPELCDRRGRPLEVHAWAMDALVAKLLPLRVSTVDLGPSPRVCAAAVAAQTRGMEVTESAYGDHIRQCVCAFTSEMGV.

10 to 17 (GAYDTGKS) contributes to the ATP binding site. The active-site Proton acceptor is Glu-33. Residues Tyr-51 and Gln-75 each contribute to the substrate site. ATP is bound at residue Arg-162. Residue Arg-168 coordinates substrate.

This sequence belongs to the herpesviridae thymidine kinase family. In terms of assembly, homodimer.

The enzyme catalyses thymidine + ATP = dTMP + ADP + H(+). Its function is as follows. Catalyzes the transfer of the gamma-phospho group of ATP to thymidine to generate dTMP in the salvage pathway of pyrimidine synthesis. The dTMP serves as a substrate for DNA polymerase during viral DNA replication. Allows the virus to be reactivated and to grow in non-proliferative cells lacking a high concentration of phosphorylated nucleic acid precursors. The polypeptide is Thymidine kinase (Suid herpesvirus 1 (strain NIA-3) (SuHV-1)).